Consider the following 161-residue polypeptide: Probable chemoreceptor glutamine deamidase CheD (161 aa).

The protein belongs to the CheD family.

It carries out the reaction L-glutaminyl-[protein] + H2O = L-glutamyl-[protein] + NH4(+). Its function is as follows. Probably deamidates glutamine residues to glutamate on methyl-accepting chemotaxis receptors (MCPs), playing an important role in chemotaxis. The protein is Probable chemoreceptor glutamine deamidase CheD of Thermococcus kodakarensis (strain ATCC BAA-918 / JCM 12380 / KOD1) (Pyrococcus kodakaraensis (strain KOD1)).